The following is a 147-amino-acid chain: Endoribonuclease YbeY (147 aa).

Residues His-109, His-113, and His-119 each coordinate Zn(2+).

The protein belongs to the endoribonuclease YbeY family. Zn(2+) serves as cofactor.

The protein localises to the cytoplasm. In terms of biological role, single strand-specific metallo-endoribonuclease involved in late-stage 70S ribosome quality control and in maturation of the 3' terminus of the 16S rRNA. This is Endoribonuclease YbeY from Thiobacillus denitrificans (strain ATCC 25259 / T1).